Consider the following 144-residue polypeptide: Thyrostimulin alpha-2 subunit (144 aa).

Residues 1–41 (MGRRDSGRAVAQRYRGVTRGVTVIACLMVVCACVGLCDATG) form the signal peptide. Cystine bridges form between C52-C107, C66-C121, C76-C136, and C80-C138.

The protein belongs to the glycoprotein hormones subunit alpha family. As to quaternary structure, heterodimer with GPHB5; non-covalently-linked. As to expression, expressed by the venom duct.

The protein resides in the secreted. The polypeptide is Thyrostimulin alpha-2 subunit (Conus victoriae (Queen Victoria cone)).